A 258-amino-acid chain; its full sequence is Homeobox-leucine zipper protein ATHB-7 (258 aa).

The segment at residues 29–88 (NKNNQRRFSDEQIKSLEMMFESETRLEPRKKVQLARELGLQPRQVAIWFQNKRARWKSKQ) is a DNA-binding region (homeobox). The tract at residues 89 to 124 (LETEYNILRQNYDNLASQFESLKKEKQALVSELQRL) is leucine-zipper. Residues 149–183 (SSTHHESENEENRRRKPEEVRPEMEMKDDKGHHGV) form a disordered region. The segment covering 151–183 (THHESENEENRRRKPEEVRPEMEMKDDKGHHGV) has biased composition (basic and acidic residues).

This sequence belongs to the HD-ZIP homeobox family. Class I subfamily. In terms of assembly, interacts with TBP2 and TFIIB1. In terms of tissue distribution, widely expressed.

Its subcellular location is the nucleus. Its function is as follows. Probable transcription activator that may act as growth regulators in response to water deficit. The sequence is that of Homeobox-leucine zipper protein ATHB-7 (ATHB-7) from Arabidopsis thaliana (Mouse-ear cress).